The primary structure comprises 120 residues: Neuromedin-B (120 aa).

Positions 1-29 are cleaved as a signal peptide; that stretch reads MSAVPLTRMLPLRFLTHLLLLSFIPLYFC. The propeptide occupies 30 to 44; the sequence is MEFSEDARNIEKIRR. At Met54 the chain carries Methionine amide. The propeptide occupies 58 to 120; the sequence is SLQDTYNPSE…MDDYIKTTQK (63 aa).

Belongs to the bombesin/neuromedin-B/ranatensin family. As to expression, brain, intestine, and ovaries and early embryos (stages 2 and 10).

The protein localises to the secreted. Functionally, stimulates smooth muscle contraction. This Xenopus laevis (African clawed frog) protein is Neuromedin-B (nmb).